A 336-amino-acid polypeptide reads, in one-letter code: Cinnamoyl-CoA reductase 2 (336 aa).

NADP(+) is bound by residues 21-27 (GAGGFIA), R46, K52, 72-73 (DL), 92-94 (TAS), Y165, K169, 192-195 (PVVV), and S207. A disulfide bridge connects residues C158 and C166. Catalysis depends on K169, which acts as the Proton donor.

It belongs to the NAD(P)-dependent epimerase/dehydratase family. Dihydroflavonol-4-reductase subfamily. In terms of processing, the formation of a reversible disulfide bond reduces activity by perturbing the positioning of nearby catalytic residues. Mainly expressed in roots and stems, especially at the second internode and, to a lower extent, in leaves and flowers. Localized in vascular elements, with weaker expression in the interfascicular (xylem fiber) region.

It is found in the cytoplasm. The enzyme catalyses (E)-coniferaldehyde + NADP(+) + CoA = (E)-feruloyl-CoA + NADPH + H(+). It carries out the reaction (E)-4-coumaraldehyde + NADP(+) + CoA = (E)-4-coumaroyl-CoA + NADPH + H(+). The catalysed reaction is (E)-sinapaldehyde + NADP(+) + CoA = (E)-sinapoyl-CoA + NADPH + H(+). It catalyses the reaction (E)-cinnamaldehyde + NADP(+) + CoA = (E)-cinnamoyl-CoA + NADPH + H(+). The enzyme catalyses (E)-caffeyl aldehyde + NADP(+) + CoA = (E)-caffeoyl-CoA + NADPH + H(+). The protein operates within aromatic compound metabolism; phenylpropanoid biosynthesis. Its function is as follows. Involved in the latter stages of lignin biosynthesis. Catalyzes one of the last steps of monolignol biosynthesis, the conversion of cinnamoyl-CoAs into their corresponding cinnamaldehydes. Mediates the conversion of caffeoyl-CoA and coumaroyl-CoA to caffaldehyde and coumaraldehyde, respectively. Also active, with a lower efficiency, toward feruloyl-CoA and sinapoyl-CoA. Involved in the production of floral volatile phenylpropanoids in flowers of fragrant cultivars from cinnamic acid, a common precursor with the anthocyanin biosynthesis pathway involved in flower pigmentation. The sequence is that of Cinnamoyl-CoA reductase 2 from Medicago truncatula (Barrel medic).